The following is a 288-amino-acid chain: Protein sprouty homolog 3 (288 aa).

The 114-residue stretch at 154 to 267 (KCVPCTAVRP…PGCRCKRHTN (114 aa)) folds into the SPR domain.

The protein belongs to the sprouty family. As to quaternary structure, interacts with TESK1. Interacts with USP11. Interacts with CAV1 (via C-terminus). Expressed in the brain with expression the highest in Purkinje cell bodies and projections in the cerebellum (at protein level). Also expressed in central and peripheral nervous system ganglion cells, superior cervical ganglion and dorsal root ganglion (at protein level). Expressed in the retinal ganglion cell layer and the inner nuclear layer (at protein level).

It is found in the cytoplasm. In terms of biological role, inhibits neurite branching, arbor length and neurite complexity. Inhibits EGF-mediated p42/44 ERK signaling. Negatively regulates the MAPK cascade, resulting in a reduction of extracellular matrix protein accumulation. May function as an antagonist of fibroblast growth factor (FGF) pathways and may negatively modulate respiratory organogenesis. This Mus musculus (Mouse) protein is Protein sprouty homolog 3.